The sequence spans 101 residues: Enhancer of yellow 2 transcription factor (101 aa).

Belongs to the ENY2 family. Component of the nuclear pore complex (NPC)-associated AMEX complex (anchoring and mRNA export complex), composed of at least e(y)2 and xmas-2. Component of the SAGA transcription coactivator-HAT complexes, at least composed of Ada2b, e(y)2, Pcaf/Gcn5, Taf10 and Nipped-A/Trrap. Within the SAGA complex, e(y)2, Sgf11, and not/nonstop form an additional subcomplex of SAGA called the DUB module (deubiquitination module). Component of the THO complex, composed of at least e(y)2, HPR1, THO2, THOC5, THOC6 and THOC7. Interacts with e(y)1. Interacts with su(Hw) (via zinc fingers). Interacts with xmas-2; required for localization to the nuclear periphery. Interacts with the nuclear pore complex (NPC).

Its subcellular location is the nucleus. The protein resides in the nucleoplasm. The protein localises to the cytoplasm. Functionally, involved in mRNA export coupled transcription activation by association with both the AMEX and the SAGA complexes. The SAGA complex is a multiprotein complex that activates transcription by remodeling chromatin and mediating histone acetylation and deubiquitination. Within the SAGA complex, participates in a subcomplex that specifically deubiquitinates histone H2B. The SAGA complex is recruited to specific gene promoters by activators, where it is required for transcription. Required for nuclear receptor-mediated transactivation. Involved in transcription elongation by recruiting the THO complex onto nascent mRNA. The AMEX complex functions in docking export-competent ribonucleoprotein particles (mRNPs) to the nuclear entrance of the nuclear pore complex (nuclear basket). AMEX participates in mRNA export and accurate chromatin positioning in the nucleus by tethering genes to the nuclear periphery. In Drosophila erecta (Fruit fly), this protein is Enhancer of yellow 2 transcription factor.